Consider the following 187-residue polypeptide: Cytochrome b-245 chaperone 1 (187 aa).

A helical membrane pass occupies residues 20 to 42 (GIRSWSLLVGILSTGLAAAYYSG). The interval 167–187 (ESPSERSQSSDSEPDGPGGQS) is disordered. Phosphoserine is present on residues S168 and S170.

It belongs to the CYBC1 family. Interacts with CYBB; CYBC1 may act as a chaperone stabilizing Cytochrome b-245 heterodimer.

The protein resides in the endoplasmic reticulum membrane. Its function is as follows. Functions as a chaperone necessary for a stable expression of the CYBA and CYBB subunits of the cytochrome b-245 heterodimer. Controls the phagocyte respiratory burst and is essential for innate immunity. The sequence is that of Cytochrome b-245 chaperone 1 from Mus musculus (Mouse).